Here is a 160-residue protein sequence, read N- to C-terminus: Major pollen allergen Bet v 1-F/I (160 aa).

The brassinolide site is built by Lys-55, Tyr-82, Tyr-84, and Asn-101.

The protein belongs to the BetVI family.

The protein localises to the cytoplasm. Functionally, may be a general steroid carrier protein. The chain is Major pollen allergen Bet v 1-F/I (BETV1F) from Betula pendula (European white birch).